The sequence spans 534 residues: Serine/threonine-protein kinase NLK (534 aa).

2 sufficient for interaction with DAPK3 regions span residues 8-132 (LVSC…KAHH) and 131-423 (HHHQ…SKRI). Required for interaction with TAB2 stretches follow at residues 8–311 (LVSC…VVTQ) and 441–534 (YHTC…LVWE). Disordered regions lie at residues 29 to 79 (AAAA…SSAA) and 97 to 147 (QQPY…DIEP). Basic residues predominate over residues 33–61 (GHHHHHHHHLPHLPPPHLHHHHHPQHHLH). Residues 110-126 (PGPAAAAPAQVQAAAAA) show a composition bias toward low complexity. A compositionally biased stretch (basic residues) spans 129 to 138 (KAHHHQHSHH). The Protein kinase domain maps to 145 to 434 (IEPDRPIGYG…AKDALAHPYL (290 aa)). ATP contacts are provided by residues 151–159 (IGYGAFGVV) and Lys174. Asp271 serves as the catalytic Proton acceptor. Thr305 is modified (phosphothreonine; by autocatalysis). Residues 305-307 (TQE) carry the TQE motif. The tract at residues 435-534 (DEGRLRYHTC…EMPPSPLVWE (100 aa)) is required for homodimerization and kinase activation and localization to the nucleus. Residue Ser529 is modified to Phosphoserine.

Belongs to the protein kinase superfamily. CMGC Ser/Thr protein kinase family. MAP kinase subfamily. Homodimer. Homodimerization is required for intermolecular autophosphorylation, kinase activation and nuclear localization. May interact with components of cullin-RING-based SCF (SKP1-CUL1-F-box protein) E3 ubiquitin-protein ligase complexes. Interacts with LEF1, MEF2A, MYBL1 and MYBL2. Interacts with the upstream activating kinases HIPK2 and MAP3K7/TAK1. Interaction with MAP3K7/TAK1 seems to be indirect, and may be mediated by other proteins such as STAT3, TAB1 and TAB2. Interacts with and phosphorylates a number of transcription factors including FOXO1, FOXO3, FOXO4, MYB, NOTCH1 and TCF7L2/TCF4. Interacts with DAPK3/ZIPK, and this interaction may disrupt interaction with transcription factors such as TCF7L2/TCF4. Forms a transcriptional repressor complex with CHD7, PPARG and SETDB1. Interacts with RNF138/NARF. Interacts with ATF5; the interaction stabilizes ATF5 at the protein level in a kinase-independent manner. Requires Mg(2+) as cofactor. In terms of processing, phosphorylated on Thr-305. Intermolecular autophosphorylation on Thr-305 activates the enzyme.

Its subcellular location is the nucleus. It localises to the cytoplasm. The catalysed reaction is L-seryl-[protein] + ATP = O-phospho-L-seryl-[protein] + ADP + H(+). It catalyses the reaction L-threonyl-[protein] + ATP = O-phospho-L-threonyl-[protein] + ADP + H(+). Its activity is regulated as follows. Activated by the non-canonical Wnt signaling pathway, in which WNT5A leads to activation of MAP3K7/TAK1 and HIPK2, which subsequently phosphorylates and activates this protein. Activated by dimerization and subsequent intermolecular autophosphorylation on Thr-305. Other cytokines such as IL6 may also activate this regulatory circuit. In terms of biological role, serine/threonine-protein kinase that regulates a number of transcription factors with key roles in cell fate determination. Positive effector of the non-canonical Wnt signaling pathway, acting downstream of WNT5A, MAP3K7/TAK1 and HIPK2. Negative regulator of the canonical Wnt/beta-catenin signaling pathway. Binds to and phosphorylates TCF7L2/TCF4 and LEF1, promoting the dissociation of the TCF7L2/LEF1/beta-catenin complex from DNA, as well as the ubiquitination and subsequent proteolysis of LEF1. Together these effects inhibit the transcriptional activation of canonical Wnt/beta-catenin target genes. Negative regulator of the Notch signaling pathway. Binds to and phosphorylates NOTCH1, thereby preventing the formation of a transcriptionally active ternary complex of NOTCH1, RBPJ/RBPSUH and MAML1. Negative regulator of the MYB family of transcription factors. Phosphorylation of MYB leads to its subsequent proteolysis while phosphorylation of MYBL1 and MYBL2 inhibits their interaction with the coactivator CREBBP. Other transcription factors may also be inhibited by direct phosphorylation of CREBBP itself. Acts downstream of IL6 and MAP3K7/TAK1 to phosphorylate STAT3, which is in turn required for activation of NLK by MAP3K7/TAK1. Upon IL1B stimulus, cooperates with ATF5 to activate the transactivation activity of C/EBP subfamily members. Phosphorylates ATF5 but also stabilizes ATF5 protein levels in a kinase-independent manner. Acts as an inhibitor of the mTORC1 complex in response to osmotic stress by mediating phosphorylation of RPTOR, thereby preventing recruitment of the mTORC1 complex to lysosomes. This chain is Serine/threonine-protein kinase NLK (NLK), found in Bos taurus (Bovine).